The chain runs to 149 residues: D-aminoacyl-tRNA deacylase (149 aa).

A Gly-cisPro motif, important for rejection of L-amino acids motif is present at residues 137–138; it reads GP.

Belongs to the DTD family. Homodimer.

It is found in the cytoplasm. The enzyme catalyses glycyl-tRNA(Ala) + H2O = tRNA(Ala) + glycine + H(+). The catalysed reaction is a D-aminoacyl-tRNA + H2O = a tRNA + a D-alpha-amino acid + H(+). In terms of biological role, an aminoacyl-tRNA editing enzyme that deacylates mischarged D-aminoacyl-tRNAs. Also deacylates mischarged glycyl-tRNA(Ala), protecting cells against glycine mischarging by AlaRS. Acts via tRNA-based rather than protein-based catalysis; rejects L-amino acids rather than detecting D-amino acids in the active site. By recycling D-aminoacyl-tRNA to D-amino acids and free tRNA molecules, this enzyme counteracts the toxicity associated with the formation of D-aminoacyl-tRNA entities in vivo and helps enforce protein L-homochirality. The chain is D-aminoacyl-tRNA deacylase from Thermosipho africanus (strain TCF52B).